We begin with the raw amino-acid sequence, 75 residues long: 8.9 kDa basic protein (75 aa).

This is 8.9 kDa basic protein (P8.9) from Orgyia pseudotsugata (Douglas-fir tussock moth).